Consider the following 156-residue polypeptide: Small ribosomal subunit protein uS7 (156 aa).

Belongs to the universal ribosomal protein uS7 family. Part of the 30S ribosomal subunit. Contacts proteins S9 and S11.

In terms of biological role, one of the primary rRNA binding proteins, it binds directly to 16S rRNA where it nucleates assembly of the head domain of the 30S subunit. Is located at the subunit interface close to the decoding center, probably blocks exit of the E-site tRNA. The protein is Small ribosomal subunit protein uS7 of Symbiobacterium thermophilum (strain DSM 24528 / JCM 14929 / IAM 14863 / T).